The following is a 464-amino-acid chain: DNA primase DnaG (464 aa).

The Toprim domain maps to D198–E272. Residues E204, D246, and D248 each coordinate Mg(2+). Basic and acidic residues predominate over residues R315–V333. A disordered region spans residues R315–T351.

It belongs to the archaeal DnaG primase family. In terms of assembly, forms a ternary complex with MCM helicase and DNA. Component of the archaeal exosome complex. Requires Mg(2+) as cofactor.

It catalyses the reaction ssDNA + n NTP = ssDNA/pppN(pN)n-1 hybrid + (n-1) diphosphate.. Its function is as follows. RNA polymerase that catalyzes the synthesis of short RNA molecules used as primers for DNA polymerase during DNA replication. Also part of the exosome, which is a complex involved in RNA degradation. Acts as a poly(A)-binding protein that enhances the interaction between heteromeric, adenine-rich transcripts and the exosome. The sequence is that of DNA primase DnaG from Thermococcus kodakarensis (strain ATCC BAA-918 / JCM 12380 / KOD1) (Pyrococcus kodakaraensis (strain KOD1)).